The chain runs to 204 residues: Proteasome subunit beta 2 (204 aa).

Residues 1–6 (MEVLPG) constitute a propeptide, removed in mature form; by autocatalysis. T7 serves as the catalytic Nucleophile.

The protein belongs to the peptidase T1B family. In terms of assembly, the 20S proteasome core is composed of 14 alpha and 14 beta subunits that assemble into four stacked heptameric rings, resulting in a barrel-shaped structure. The two inner rings, each composed of seven catalytic beta subunits, are sandwiched by two outer rings, each composed of seven alpha subunits. The catalytic chamber with the active sites is on the inside of the barrel. Has a gated structure, the ends of the cylinder being occluded by the N-termini of the alpha-subunits. Is capped at one or both ends by the proteasome regulatory ATPase, PAN.

The protein localises to the cytoplasm. It carries out the reaction Cleavage of peptide bonds with very broad specificity.. With respect to regulation, the formation of the proteasomal ATPase PAN-20S proteasome complex, via the docking of the C-termini of PAN into the intersubunit pockets in the alpha-rings, triggers opening of the gate for substrate entry. Interconversion between the open-gate and close-gate conformations leads to a dynamic regulation of the 20S proteasome proteolysis activity. Its function is as follows. Component of the proteasome core, a large protease complex with broad specificity involved in protein degradation. The sequence is that of Proteasome subunit beta 2 from Thermofilum pendens (strain DSM 2475 / Hrk 5).